The following is a 62-amino-acid chain: Phospholipase A2 superbin a (62 aa).

Tyrosine 28, glycine 30, and glycine 32 together coordinate Ca(2+). Cysteine 29 and cysteine 45 are oxidised to a cystine. Histidine 48 is an active-site residue. Aspartate 49 contributes to the Ca(2+) binding site.

It depends on Ca(2+) as a cofactor. In terms of tissue distribution, expressed by the venom gland.

It localises to the secreted. The catalysed reaction is a 1,2-diacyl-sn-glycero-3-phosphocholine + H2O = a 1-acyl-sn-glycero-3-phosphocholine + a fatty acid + H(+). In terms of biological role, snake venom phospholipase A2 (PLA2) that inhibits collagen-induced platelet aggregation. In terms of inhibition of platelet aggregation, superbin a is more potent as superbin b, c, and d. PLA2 catalyzes the calcium-dependent hydrolysis of the 2-acyl groups in 3-sn-phosphoglycerides. The chain is Phospholipase A2 superbin a from Austrelaps superbus (Lowland copperhead snake).